Here is a 223-residue protein sequence, read N- to C-terminus: uncharacterized protein (223 aa).

An N-terminal signal peptide occupies residues 1–17 (MLGQGLIFISLAFVAHA). Residue Asn58 is glycosylated (N-linked (GlcNAc...) asparagine). Positions 149 to 188 (VRKKGSRPSKPQKEKQGNKQGSKTEESPNVDEDELESEPE) are disordered. A compositionally biased stretch (basic and acidic residues) spans 159 to 174 (PQKEKQGNKQGSKTEE). The span at 176 to 187 (PNVDEDELESEP) shows a compositional bias: acidic residues. The chain crosses the membrane as a helical span at residues 191-211 (TFFQKYGLYLIPILFLIIMSG).

The protein localises to the endoplasmic reticulum membrane. This is an uncharacterized protein from Schizosaccharomyces pombe (strain 972 / ATCC 24843) (Fission yeast).